We begin with the raw amino-acid sequence, 146 residues long: Urease accessory protein UreE 1 (146 aa).

It belongs to the UreE family.

The protein localises to the cytoplasm. Involved in urease metallocenter assembly. Binds nickel. Probably functions as a nickel donor during metallocenter assembly. The protein is Urease accessory protein UreE 1 of Pseudomonas syringae pv. syringae (strain B728a).